A 553-amino-acid polypeptide reads, in one-letter code: Hydroxylamine reductase (553 aa).

[2Fe-2S] cluster-binding residues include Cys3, Cys6, Cys18, and Cys25. 8 residues coordinate hybrid [4Fe-2O-2S] cluster: His252, Glu276, Cys320, Cys408, Cys436, Cys461, Glu495, and Lys497. The residue at position 408 (Cys408) is a Cysteine persulfide.

This sequence belongs to the HCP family. [2Fe-2S] cluster serves as cofactor. The cofactor is hybrid [4Fe-2O-2S] cluster.

The protein localises to the cytoplasm. It catalyses the reaction A + NH4(+) + H2O = hydroxylamine + AH2 + H(+). Functionally, catalyzes the reduction of hydroxylamine to form NH(3) and H(2)O. This is Hydroxylamine reductase from Photobacterium phosphoreum.